The chain runs to 628 residues: 1,4-alpha-glucan branching enzyme GlgB (628 aa).

The Nucleophile role is filled by D304. Residue E355 is the Proton donor of the active site.

Belongs to the glycosyl hydrolase 13 family. GlgB subfamily. In terms of assembly, monomer.

The catalysed reaction is Transfers a segment of a (1-&gt;4)-alpha-D-glucan chain to a primary hydroxy group in a similar glucan chain.. Its pathway is glycan biosynthesis; glycogen biosynthesis. In terms of biological role, catalyzes the formation of the alpha-1,6-glucosidic linkages in glycogen by scission of a 1,4-alpha-linked oligosaccharide from growing alpha-1,4-glucan chains and the subsequent attachment of the oligosaccharide to the alpha-1,6 position. This is 1,4-alpha-glucan branching enzyme GlgB from Streptococcus mutans serotype c (strain ATCC 700610 / UA159).